We begin with the raw amino-acid sequence, 232 residues long: MIRDERWFGVYSFEDTPFLMETLTDLRNINTDNISFRKGLVRLGRYMGYELTKTMEFEKINITTPLEKTEGIISKDRKNVVIITILRAAFPLMEGLIKTLESAKVGIISASRGHAPKFNIEMNYVKVPRVTENDTIIIADPMIATGSTLINVLTELKKSEKSKRIVILGVLAAPEGIDSIKKAFPDVEIFVTKIDRELNKDGYIVPGLGDAGDRAFGEPFKVSLLPQMHNLE.

38 to 42 provides a ligand contact to GTP; that stretch reads KGLVR. 5-phospho-alpha-D-ribose 1-diphosphate is bound by residues Arg-87, Arg-112, and 140-148; that span reads DPMIATGST. Residues Ile-204 and 209 to 211 contribute to the uracil site; that span reads GDA. Residue Asp-210 participates in 5-phospho-alpha-D-ribose 1-diphosphate binding.

This sequence belongs to the UPRTase family. Mg(2+) serves as cofactor.

It carries out the reaction UMP + diphosphate = 5-phospho-alpha-D-ribose 1-diphosphate + uracil. It functions in the pathway pyrimidine metabolism; UMP biosynthesis via salvage pathway; UMP from uracil: step 1/1. Its activity is regulated as follows. Allosterically activated by GTP. Its function is as follows. Catalyzes the conversion of uracil and 5-phospho-alpha-D-ribose 1-diphosphate (PRPP) to UMP and diphosphate. The protein is Uracil phosphoribosyltransferase of Methanococcus vannielii (strain ATCC 35089 / DSM 1224 / JCM 13029 / OCM 148 / SB).